A 257-amino-acid chain; its full sequence is MTYETILVERDQRVGIITLNRPQALNALNSQVMNEVTSAATELDDDPDIGAIIITGSAKAFAAGADIKEMADLTFADAFTADFFATWGKLAAVRTPTIAAVAGYALGGGCELAMMCDVLIAADTAKFGQPEIKLGVLPGMGGSQRLTRAIGKAKAMDLILTGRTMDAAEAERSGLVSRVVPADDLLTEARATATTISQMSASAARMAKEAVNRAFESSLSEGLLYERRLFHSAFATEDQSEGMAAFIEKRAPQFTHR.

The protein belongs to the enoyl-CoA hydratase/isomerase family.

The enzyme catalyses a (3S)-3-hydroxyacyl-CoA = a (2E)-enoyl-CoA + H2O. The catalysed reaction is a 4-saturated-(3S)-3-hydroxyacyl-CoA = a (3E)-enoyl-CoA + H2O. In terms of biological role, could possibly oxidize fatty acids using specific components. In Mycobacterium tuberculosis (strain CDC 1551 / Oshkosh), this protein is Probable enoyl-CoA hydratase echA8 (echA8).